A 335-amino-acid chain; its full sequence is Protein STRICTOSIDINE SYNTHASE-LIKE 12 (335 aa).

The signal sequence occupies residues 1–22; it reads MTSFCSMISLLLLLSLSSAVFS. N-linked (GlcNAc...) asparagine glycosylation occurs at N80.

Belongs to the strictosidine synthase family.

Its subcellular location is the vacuole. The catalysed reaction is 3alpha(S)-strictosidine + H2O = secologanin + tryptamine. The protein operates within alkaloid biosynthesis; 3alpha(S)-strictosidine biosynthesis; 3alpha(S)-strictosidine from secologanin and tryptamine: step 1/1. Its function is as follows. Catalyzes the stereospecific condensation of tryptamine with secologanin to form strictosidine, the key intermediate of indole alkaloid biosynthesis. This Arabidopsis thaliana (Mouse-ear cress) protein is Protein STRICTOSIDINE SYNTHASE-LIKE 12.